A 469-amino-acid polypeptide reads, in one-letter code: Ribonuclease Y (469 aa).

Residues 6-26 (VTLILVGVIIFLFISLFFYVI) traverse the membrane as a helical segment. Residues 149 to 209 (FSFTIKLENE…IRREKAKRTM (61 aa)) form the KH domain. The HD domain occupies 276-369 (VLLHCVEAAV…VKVVDKLSAS (94 aa)).

It belongs to the RNase Y family.

The protein resides in the cell membrane. Its function is as follows. Endoribonuclease that initiates mRNA decay. In Malacoplasma penetrans (strain HF-2) (Mycoplasma penetrans), this protein is Ribonuclease Y.